A 427-amino-acid chain; its full sequence is Indole diterpene prenyltransferase ptmD (427 aa).

77–78 (YV) is a binding site for L-tryptophan. The substrate site is built by arginine 99, lysine 186, tyrosine 188, arginine 259, lysine 261, tyrosine 263, tyrosine 344, tyrosine 409, and tyrosine 413.

This sequence belongs to the tryptophan dimethylallyltransferase family.

It functions in the pathway secondary metabolite biosynthesis. Its function is as follows. Indole diterpene prenyltransferase; part of the gene cluster that mediates the biosynthesis of the indole diterpenes penitrems. The geranylgeranyl diphosphate (GGPP) synthase ptmG catalyzes the first step in penitrem biosynthesis via conversion of farnesyl pyrophosphate and isopentyl pyrophosphate into geranylgeranyl pyrophosphate (GGPP). Condensation of indole-3-glycerol phosphate with GGPP by the prenyl transferase ptmC then forms 3-geranylgeranylindole (3-GGI). Epoxidation by the FAD-dependent monooxygenase ptmM leads to a epoxidized-GGI that is substrate of the terpene cyclase ptmB for cyclization to yield paspaline. Paspaline is subsequently converted to 13-desoxypaxilline by the cytochrome P450 monooxygenase ptmP, the latter being then converted to paxilline by the cytochrome P450 monooxygenase ptmQ. Paxilline is converted to beta-paxitriol via C-10 ketoreduction by the short-chain dehydrogenase ptmH which can be monoprenylated at the C-20 by the indole diterpene prenyltransferase ptmD. A two-step elimination (acetylation and elimination) process performed by the O-acetyltransferase ptmV and ptmI leads to the production of the prenylated form of penijanthine. The FAD-linked oxidoreductase ptmO then converts the prenylated form of penijanthine into PC-M5 which is in turn transformed into PC-M4 by the aromatic dimethylallyltransferase ptmE. Five sequential oxidative transformations performed by the cytochrome P450 monooxygenases ptmK, ptmU, ptmL, ptmN and ptmJ yield the various penitrem compounds. PtmK, ptmU and ptmM are involved in the formation of the key bicyclic ring of penitrem C via the formation of the intermediates secopenitrem D and penitrem D. PtmL catalyzes the epoxidation of penitrem D and C to yield penitrem B and F, respectively. PtmJ catalyzes the last benzylic hydroxylation to convert penitrem B to prenitrem E and penitrem F to penitrem A. The sequence is that of Indole diterpene prenyltransferase ptmD from Penicillium ochrochloron.